Reading from the N-terminus, the 1135-residue chain is Protocadherin-18 (1135 aa).

The signal sequence occupies residues 1-27 (MHQMNAKMHFRFVFALLIVSFNHDVLG). Cadherin domains are found at residues 28–137 (KNLK…SPQF), 138–246 (SRSL…SPAF), 247–354 (EQQS…KPEI), 361–465 (PGKE…PPHF), 466–576 (QRSR…VPVV), and 582–688 (RNNT…STAM). Residues 28-699 (KNLKYRIYEE…SVSQASLDVS (672 aa)) are Extracellular-facing. Asn-103 carries N-linked (GlcNAc...) asparagine glycosylation. Asn-269, Asn-420, Asn-559, Asn-583, and Asn-641 each carry an N-linked (GlcNAc...) asparagine glycan. The chain crosses the membrane as a helical span at residues 700-720 (MIIIISLGAICAVLLVIMVLF). Over 721 to 1135 (ATRCNREKKD…NKLLQDVRQS (415 aa)) the chain is Cytoplasmic. 4 disordered regions span residues 769 to 800 (LPIR…NSHQ), 869 to 889 (SLKD…DLGR), 942 to 1003 (DYRS…STSS), and 1023 to 1046 (YSEC…PAKT). A compositionally biased stretch (polar residues) spans 791 to 800 (GSRQSHNSHQ). Positions 869–878 (SLKDSGRGDS) are enriched in basic and acidic residues. The segment at 893–1135 (IDRLLGEGFS…NKLLQDVRQS (243 aa)) is interaction with DAB1. The segment covering 1028-1039 (EVDRSNSLERRK) has biased composition (basic and acidic residues).

In terms of assembly, interacts with DAB1. Expressed in all tissues, with highest expression in lung and ovary.

The protein resides in the cell membrane. In terms of biological role, potential calcium-dependent cell-adhesion protein. The protein is Protocadherin-18 (PCDH18) of Homo sapiens (Human).